The sequence spans 540 residues: Glucose-6-phosphate isomerase (540 aa).

Glutamate 351 functions as the Proton donor in the catalytic mechanism. Residues histidine 382 and lysine 506 contribute to the active site.

This sequence belongs to the GPI family.

It is found in the cytoplasm. The enzyme catalyses alpha-D-glucose 6-phosphate = beta-D-fructose 6-phosphate. It functions in the pathway carbohydrate biosynthesis; gluconeogenesis. The protein operates within carbohydrate degradation; glycolysis; D-glyceraldehyde 3-phosphate and glycerone phosphate from D-glucose: step 2/4. In terms of biological role, catalyzes the reversible isomerization of glucose-6-phosphate to fructose-6-phosphate. In Corynebacterium glutamicum (strain R), this protein is Glucose-6-phosphate isomerase.